We begin with the raw amino-acid sequence, 506 residues long: Protein MGF 505-9R (506 aa).

This sequence belongs to the asfivirus MGF 505 family.

Plays a role in virus cell tropism, and may be required for efficient virus replication in macrophages. This Ornithodoros (relapsing fever ticks) protein is Protein MGF 505-9R.